A 473-amino-acid chain; its full sequence is Bifunctional protein GlmU (473 aa).

The interval 1–226 is pyrophosphorylase; sequence MRAPVAVVIL…AGEASGINDL (226 aa). Residues 10-13, Lys24, Gln75, 80-81, 102-104, Gly136, Glu151, Asn166, and Asn224 contribute to the UDP-N-acetyl-alpha-D-glucosamine site; these read LAAG, GT, and YGD. Asp104 provides a ligand contact to Mg(2+). Residue Asn224 participates in Mg(2+) binding. The interval 227-247 is linker; that stretch reads VQLAEVEEAFQRRWARRLLQG. The N-acetyltransferase stretch occupies residues 248-473; sequence GLRLVAPHRF…TPASGGAKEE (226 aa). Residues Arg330 and Lys348 each contribute to the UDP-N-acetyl-alpha-D-glucosamine site. The Proton acceptor role is filled by His360. Positions 363 and 374 each coordinate UDP-N-acetyl-alpha-D-glucosamine. Residues Ala377, 383–384, Ser402, Ala420, and Arg437 contribute to the acetyl-CoA site; that span reads NY. The tract at residues 439–473 is disordered; sequence RARTIPGWQHPGLTGRRGPPDDNDATPASGGAKEE.

In the N-terminal section; belongs to the N-acetylglucosamine-1-phosphate uridyltransferase family. It in the C-terminal section; belongs to the transferase hexapeptide repeat family. Homotrimer. Mg(2+) is required as a cofactor.

It localises to the cytoplasm. It catalyses the reaction alpha-D-glucosamine 1-phosphate + acetyl-CoA = N-acetyl-alpha-D-glucosamine 1-phosphate + CoA + H(+). The catalysed reaction is N-acetyl-alpha-D-glucosamine 1-phosphate + UTP + H(+) = UDP-N-acetyl-alpha-D-glucosamine + diphosphate. Its pathway is nucleotide-sugar biosynthesis; UDP-N-acetyl-alpha-D-glucosamine biosynthesis; N-acetyl-alpha-D-glucosamine 1-phosphate from alpha-D-glucosamine 6-phosphate (route II): step 2/2. The protein operates within nucleotide-sugar biosynthesis; UDP-N-acetyl-alpha-D-glucosamine biosynthesis; UDP-N-acetyl-alpha-D-glucosamine from N-acetyl-alpha-D-glucosamine 1-phosphate: step 1/1. It participates in bacterial outer membrane biogenesis; LPS lipid A biosynthesis. Catalyzes the last two sequential reactions in the de novo biosynthetic pathway for UDP-N-acetylglucosamine (UDP-GlcNAc). The C-terminal domain catalyzes the transfer of acetyl group from acetyl coenzyme A to glucosamine-1-phosphate (GlcN-1-P) to produce N-acetylglucosamine-1-phosphate (GlcNAc-1-P), which is converted into UDP-GlcNAc by the transfer of uridine 5-monophosphate (from uridine 5-triphosphate), a reaction catalyzed by the N-terminal domain. The polypeptide is Bifunctional protein GlmU (Halorhodospira halophila (strain DSM 244 / SL1) (Ectothiorhodospira halophila (strain DSM 244 / SL1))).